Consider the following 917-residue polypeptide: Gamma-tubulin complex component 3 (917 aa).

It belongs to the TUBGCP family. As to quaternary structure, gamma-tubulin small complex (Gamma TuSC) is a heterotetrameric complex which contains two molecules of gamma-tubulin, and one molecule each of Dgrip84 and Dgrip91. The gamma-tubulin in this complex binds preferentially to GDP over GTP.

The protein localises to the cytoplasm. It is found in the cytoskeleton. Its subcellular location is the microtubule organizing center. It localises to the centrosome. The protein resides in the perinuclear region. In Drosophila melanogaster (Fruit fly), this protein is Gamma-tubulin complex component 3.